We begin with the raw amino-acid sequence, 537 residues long: Phosphoenolpyruvate carboxykinase (ATP) (537 aa).

3 residues coordinate substrate: arginine 61, tyrosine 195, and lysine 201. ATP is bound by residues lysine 201, histidine 220, and 236 to 244 (GLSGTGKTT). Mn(2+)-binding residues include lysine 201 and histidine 220. Aspartate 257 serves as a coordination point for Mn(2+). Glutamate 285 lines the ATP pocket. Residues 311-321 (PDFDNGSKTEN) are compositionally biased toward basic and acidic residues. The interval 311-342 (PDFDNGSKTENTRSAYPLESIPNASPTGRAGQ) is disordered. Arginine 323 is a binding site for substrate. ATP contacts are provided by arginine 323 and threonine 448.

This sequence belongs to the phosphoenolpyruvate carboxykinase (ATP) family. It depends on Mn(2+) as a cofactor.

It localises to the cytoplasm. It catalyses the reaction oxaloacetate + ATP = phosphoenolpyruvate + ADP + CO2. It functions in the pathway carbohydrate biosynthesis; gluconeogenesis. In terms of biological role, involved in the gluconeogenesis. Catalyzes the conversion of oxaloacetate (OAA) to phosphoenolpyruvate (PEP) through direct phosphoryl transfer between the nucleoside triphosphate and OAA. In Rhodopseudomonas palustris (strain BisB5), this protein is Phosphoenolpyruvate carboxykinase (ATP).